Here is a 219-residue protein sequence, read N- to C-terminus: Uracil-DNA glycosylase (219 aa).

D61 (proton acceptor) is an active-site residue.

This sequence belongs to the uracil-DNA glycosylase (UDG) superfamily. UNG family.

Its subcellular location is the cytoplasm. It catalyses the reaction Hydrolyzes single-stranded DNA or mismatched double-stranded DNA and polynucleotides, releasing free uracil.. Functionally, excises uracil residues from the DNA which can arise as a result of misincorporation of dUMP residues by DNA polymerase or due to deamination of cytosine. This is Uracil-DNA glycosylase from Haemophilus influenzae (strain PittEE).